Here is a 505-residue protein sequence, read N- to C-terminus: Calcium/calmodulin-dependent protein kinase kinase 1 (505 aa).

Positions 27 to 66 (HLEEAEEGPEPASNGVDPPPRARAASVIPGSASRPTPVRP) are disordered. A phosphoserine mark is found at serine 67 and serine 74. Arginine 78 bears the Asymmetric dimethylarginine mark. Serine 100 carries the post-translational modification Phosphoserine. Residue threonine 108 is modified to Phosphothreonine. In terms of domain architecture, Protein kinase spans 128-409 (YKLQSEIGKG…VSDIKLHPWV (282 aa)). Residues 134–142 (IGKGAYGVV) and lysine 157 contribute to the ATP site. The RP domain stretch occupies residues 167 to 189 (QYGFPRRPPPRGSQAPQGGPAKQ). The active-site Proton acceptor is the aspartate 275. Positions 435 to 440 (KNSVKL) are autoinhibitory domain. Positions 438–463 (VKLIPSWTTVILVKSMLRKRSFGNPF) are calmodulin-binding. A phosphoserine mark is found at serine 458, serine 475, and serine 492. Residues 460 to 505 (GNPFEPQARREERSMSAPGNLLLKEGCGEGGKSPELPGVQEDEAAS) form a disordered region.

This sequence belongs to the protein kinase superfamily. Ser/Thr protein kinase family. Interacts with CAMK4 and calmodulin. Post-translationally, appears to be autophosphorylated. Phosphorylated at multiple sites by PRCAKA/PKA. Phosphorylation of Ser-458 is blocked upon binding to Ca(2+)/calmodulin. May be phosphorylated by CAMK1 and CAMK4. In terms of tissue distribution, mostly expressed in the brain with higher levels in cortex and hippocampus. Lower expression levels were detected in striatum, nucleus accumbens and cerebellum (at protein level). Abundant in forebrain, weaker in cerebellum and also detected in thymus and spleen.

The protein localises to the cytoplasm. It localises to the nucleus. It carries out the reaction L-seryl-[protein] + ATP = O-phospho-L-seryl-[protein] + ADP + H(+). It catalyses the reaction L-threonyl-[protein] + ATP = O-phospho-L-threonyl-[protein] + ADP + H(+). With respect to regulation, activated by Ca(2+)/calmodulin. Binding of calmodulin may relieve intrasteric autoinhibition. Partially inhibited upon phosphorylation by PRCAKA/PKA. May be regulated through phosphorylation by CAMK1 and CAMK4. Calcium/calmodulin-dependent protein kinase that belongs to a proposed calcium-triggered signaling cascade involved in a number of cellular processes. Phosphorylates CAMK1, CAMK1D, CAMK1G and CAMK4. Involved in regulating cell apoptosis. Promotes cell survival by phosphorylating AKT1/PKB that inhibits pro-apoptotic BAD/Bcl2-antagonist of cell death. The protein is Calcium/calmodulin-dependent protein kinase kinase 1 (Camkk1) of Rattus norvegicus (Rat).